A 338-amino-acid chain; its full sequence is POU domain, class 4, transcription factor 3 (338 aa).

A POU-IV box motif is present at residues 56 to 65 (RAEALAAVDI). Residues 179 to 256 (DVESDPRELE…VLQAWLEEAE (78 aa)) form the POU-specific domain. Positions 274 to 333 (RKRKRTSIAAPEKRSLEAYFAIQPRPSSEKIAAIAEKLDLKKNVVRVWFCNQRQKQKRMK) form a DNA-binding region, homeobox.

Belongs to the POU transcription factor family. Class-4 subfamily. In terms of assembly, interacts with ISL1. As to expression, brain. Seems to be specific to the retina.

It is found in the nucleus. The protein localises to the cytoplasm. Functionally, acts as a transcriptional activator. Acts by binding to sequences related to the consensus octamer motif 5'-ATGCAAAT-3' in the regulatory regions of its target genes. Involved in the auditory system development, required for terminal differentiation of hair cells in the inner ear. This is POU domain, class 4, transcription factor 3 (POU4F3) from Homo sapiens (Human).